The following is a 408-amino-acid chain: Peptidase T (408 aa).

H78 is a Zn(2+) binding site. D80 is a catalytic residue. D141 contacts Zn(2+). Catalysis depends on E175, which acts as the Proton acceptor. Zn(2+) is bound by residues E176, D198, and H380.

The protein belongs to the peptidase M20B family. It depends on Zn(2+) as a cofactor.

It is found in the cytoplasm. It carries out the reaction Release of the N-terminal residue from a tripeptide.. Cleaves the N-terminal amino acid of tripeptides. The sequence is that of Peptidase T from Clostridium botulinum (strain Kyoto / Type A2).